The primary structure comprises 257 residues: Major prion protein (257 aa).

The first 24 residues, 1-24 (MVKSHIGSWLLVLFVATWSDIGFC), serve as a signal peptide directing secretion. The tract at residues 25–234 (KKRPKPGGGW…ESEAYYQRGA (210 aa)) is interaction with GRB2, ERI3 and SYN1. The disordered stretch occupies residues 27-114 (RPKPGGGWNT…KPSKPKTNMK (88 aa)). 5 repeat units span residues 54 to 62 (PQGGGGWGQ), 63 to 70 (PHGGGWGQ), 71 to 78 (PHGGGWGQ), 79 to 86 (PHGGGWGQ), and 87 to 95 (PHGGGGWGQ). The interval 54–95 (PQGGGGWGQPHGGGWGQPHGGGWGQPHGGGWGQPHGGGGWGQ) is 5 X 8 AA tandem repeats of P-H-G-G-G-W-G-Q. Positions 55–101 (QGGGGWGQPHGGGWGQPHGGGWGQPHGGGWGQPHGGGGWGQGGGSHG) are enriched in gly residues. Cu(2+) contacts are provided by His64, Gly65, Gly66, His72, Gly73, Gly74, His80, Gly81, Gly82, His88, Gly90, and Gly91. Cys183 and Cys218 are disulfide-bonded. Asn185 and Asn201 each carry an N-linked (GlcNAc...) asparagine glycan. A lipid anchor (GPI-anchor amidated alanine) is attached at Ala234. Residues 235-257 (SAILFSPPPVILLISLLILLIVG) constitute a propeptide, removed in mature form.

It belongs to the prion family. In terms of assembly, monomer and homodimer. Has a tendency to aggregate into amyloid fibrils containing a cross-beta spine, formed by a steric zipper of superposed beta-strands. Soluble oligomers may represent an intermediate stage on the path to fibril formation. Copper binding may promote oligomerization. Interacts with GRB2, APP, ERI3/PRNPIP and SYN1. Mislocalized cytosolically exposed PrP interacts with MGRN1; this interaction alters MGRN1 subcellular location and causes lysosomal enlargement. Interacts with KIAA1191.

It is found in the cell membrane. Its subcellular location is the golgi apparatus. Its function is as follows. Its primary physiological function is unclear. Has cytoprotective activity against internal or environmental stresses. May play a role in neuronal development and synaptic plasticity. May be required for neuronal myelin sheath maintenance. May play a role in iron uptake and iron homeostasis. Soluble oligomers are toxic to cultured neuroblastoma cells and induce apoptosis (in vitro). Association with GPC1 (via its heparan sulfate chains) targets PRNP to lipid rafts. Also provides Cu(2+) or Zn(2+) for the ascorbate-mediated GPC1 deaminase degradation of its heparan sulfate side chains. The sequence is that of Major prion protein (PRNP) from Mustela putorius furo (European domestic ferret).